We begin with the raw amino-acid sequence, 193 residues long: Acyl carrier protein phosphodiesterase (193 aa).

This sequence belongs to the AcpH family.

The catalysed reaction is holo-[ACP] + H2O = apo-[ACP] + (R)-4'-phosphopantetheine + H(+). Functionally, converts holo-ACP to apo-ACP by hydrolytic cleavage of the phosphopantetheine prosthetic group from ACP. This chain is Acyl carrier protein phosphodiesterase, found in Salmonella dublin (strain CT_02021853).